The primary structure comprises 387 residues: Exodeoxyribonuclease 7 large subunit (387 aa).

The protein belongs to the XseA family. In terms of assembly, heterooligomer composed of large and small subunits.

The protein resides in the cytoplasm. The enzyme catalyses Exonucleolytic cleavage in either 5'- to 3'- or 3'- to 5'-direction to yield nucleoside 5'-phosphates.. Its function is as follows. Bidirectionally degrades single-stranded DNA into large acid-insoluble oligonucleotides, which are then degraded further into small acid-soluble oligonucleotides. The chain is Exodeoxyribonuclease 7 large subunit from Synechococcus sp. (strain CC9605).